The chain runs to 1202 residues: MQKDKKNYKLRKFGPITERRDYSITKHSLPVGDILATSKKSYQDFINKKIEELLNEIYPIEASNKEASLEYEKKSVKFELPFKKAEHENLQIKTCKAKKTNFSMKVYITLKKVVSQTGVVKKEKILLGEIPYITSSGSFIINGSEKVIVSQLIRSPGAYFGVSVRNKQSEDLFNKLEILPRIGSWIEVSHKVTSANLDAIKIKIDKNKNINIVTFLASFGLLADDIRYLFGKNEVLEETIRKNKTIDITEFSRQEIMDLCQEKIFRIIRKGDRISEESKRSLLSGMLFDKKRYNLSKTGRYMLNNKLSLVERITNTYLAQKVVSHLGNTFDVGTYVTYEIAKEIQESFEAKAKDNKSNLHLEKIPNINPDDVYYKINKDNKSLNKRINIARIKIWPTKRAMDANETPSEVIGNDPKATEEHLLLSDIIAAISYYLNLTVGIGQDDDPDSLMNKRIVSVGELLEGELRIALLKLEKATRERMGAKEPDKITAKNVTNNKLITNQMKTFFNTSKLAQFMDQINPLAEISNKRRVTSLGPGGLNRDTAQFEVRDVHSTHYGRICPIETPEGPNIGLILNYAIYSTVNELGFLQTPYYKVNDGVVDYNDVRYLTSYEEIGYAFAQSSVHVNDKNEIIDEQITIKKDYNYIIGSPKDIDFLEVSSKQIVSVAAAAIPFLENNDANRALMGSNMQRQAVPLIEAEAPLVATGIEADIAKFSSYNIVANNDGEVIYVDGTKIQVRTAKKIDTYNLKNFEKSNQGTIIQQKPIVKVGDHVKEGDLLVDGSSFKDGEMALGKNLLVGFTTWNGYNFEDAIIINERLVKDDVLTSIYIEEQTIQFRISKSSEDIMTRDIPNVSKYSMRNLDEFGIIKVGSEVVAGDVLVGRISPKGEENPSQEEKLLNAIFNQRPQNYKDTSLKVKNGHNGTVIHVEVLSRENGDILEDGLDSIIKVYIAQKRKIKVGDKMAGRHGNKGVISIILPEEDMPHLEDGTPLDIMLNPQGVPSRMNIGQVLEMHLGMAAKKLGTKFVTPSFDGIKKETIEDLLQEANLDKSGKQVVIDPITGEKFDNPISVGVIYMLKLNHMVDDKMHARSVGPYSLITQQPLGGKSQNGGQRFGEMETWALESYGASNILQEILTYKSDDIYSRNLVYKALVNDSAIPNPGMPESFNVLSNELKGLLMKLGITETESNSDELIQHFDHLGVEHE.

This sequence belongs to the RNA polymerase beta chain family. In terms of assembly, the RNAP catalytic core consists of 2 alpha, 1 beta, 1 beta' and 1 omega subunit. When a sigma factor is associated with the core the holoenzyme is formed, which can initiate transcription.

The catalysed reaction is RNA(n) + a ribonucleoside 5'-triphosphate = RNA(n+1) + diphosphate. In terms of biological role, DNA-dependent RNA polymerase catalyzes the transcription of DNA into RNA using the four ribonucleoside triphosphates as substrates. This chain is DNA-directed RNA polymerase subunit beta, found in Mycoplasmopsis synoviae (strain 53) (Mycoplasma synoviae).